A 499-amino-acid polypeptide reads, in one-letter code: Glycerol kinase (499 aa).

ADP is bound at residue T12. 3 residues coordinate ATP: T12, T13, and S14. T12 contacts sn-glycerol 3-phosphate. An ADP-binding site is contributed by R16. Residues R82, E83, Y134, and D243 each coordinate sn-glycerol 3-phosphate. Positions 82, 83, 134, 243, and 244 each coordinate glycerol. Residues T265 and G308 each contribute to the ADP site. ATP contacts are provided by T265, G308, Q312, and G411. G411 serves as a coordination point for ADP.

The protein belongs to the FGGY kinase family.

The catalysed reaction is glycerol + ATP = sn-glycerol 3-phosphate + ADP + H(+). Its pathway is polyol metabolism; glycerol degradation via glycerol kinase pathway; sn-glycerol 3-phosphate from glycerol: step 1/1. With respect to regulation, inhibited by fructose 1,6-bisphosphate (FBP). In terms of biological role, key enzyme in the regulation of glycerol uptake and metabolism. Catalyzes the phosphorylation of glycerol to yield sn-glycerol 3-phosphate. This Agrobacterium fabrum (strain C58 / ATCC 33970) (Agrobacterium tumefaciens (strain C58)) protein is Glycerol kinase.